Consider the following 282-residue polypeptide: Energy-coupling factor transporter ATP-binding protein EcfA1 (282 aa).

Positions 6–243 (VTVKHLSFTY…EVLIKSAGLE (238 aa)) constitute an ABC transporter domain. 40 to 47 (GHNGSGKS) provides a ligand contact to ATP.

This sequence belongs to the ABC transporter superfamily. Energy-coupling factor EcfA family. Forms a stable energy-coupling factor (ECF) transporter complex composed of 2 membrane-embedded substrate-binding proteins (S component), 2 ATP-binding proteins (A component) and 2 transmembrane proteins (T component).

It is found in the cell membrane. Its function is as follows. ATP-binding (A) component of a common energy-coupling factor (ECF) ABC-transporter complex. Unlike classic ABC transporters this ECF transporter provides the energy necessary to transport a number of different substrates. The sequence is that of Energy-coupling factor transporter ATP-binding protein EcfA1 from Lactobacillus johnsonii (strain CNCM I-12250 / La1 / NCC 533).